A 426-amino-acid chain; its full sequence is Serine--tRNA ligase (426 aa).

The disordered stretch occupies residues 36 to 66 (KRKHLQERTQDLQSQRNTISKEIGQKKAKGE). Positions 46-55 (DLQSQRNTIS) are enriched in polar residues. 233–235 (TAE) lines the L-serine pocket. Residue 264 to 266 (RSE) participates in ATP binding. Glu287 is a binding site for L-serine. 351–354 (EISS) contributes to the ATP binding site. Ser387 is an L-serine binding site.

The protein belongs to the class-II aminoacyl-tRNA synthetase family. Type-1 seryl-tRNA synthetase subfamily. In terms of assembly, homodimer. The tRNA molecule binds across the dimer.

Its subcellular location is the cytoplasm. It carries out the reaction tRNA(Ser) + L-serine + ATP = L-seryl-tRNA(Ser) + AMP + diphosphate + H(+). The catalysed reaction is tRNA(Sec) + L-serine + ATP = L-seryl-tRNA(Sec) + AMP + diphosphate + H(+). It functions in the pathway aminoacyl-tRNA biosynthesis; selenocysteinyl-tRNA(Sec) biosynthesis; L-seryl-tRNA(Sec) from L-serine and tRNA(Sec): step 1/1. Its function is as follows. Catalyzes the attachment of serine to tRNA(Ser). Is also able to aminoacylate tRNA(Sec) with serine, to form the misacylated tRNA L-seryl-tRNA(Sec), which will be further converted into selenocysteinyl-tRNA(Sec). In Francisella tularensis subsp. tularensis (strain FSC 198), this protein is Serine--tRNA ligase.